The chain runs to 239 residues: Sugar fermentation stimulation protein homolog (239 aa).

This sequence belongs to the SfsA family.

This is Sugar fermentation stimulation protein homolog from Cyanothece sp. (strain PCC 7425 / ATCC 29141).